Consider the following 509-residue polypeptide: Photosystem II CP47 reaction center protein (509 aa).

6 consecutive transmembrane segments (helical) span residues serine 21–serine 36, isoleucine 101–tryptophan 115, glycine 140–phenylalanine 156, isoleucine 203–serine 218, valine 237–valine 252, and serine 457–arginine 472.

It belongs to the PsbB/PsbC family. PsbB subfamily. In terms of assembly, PSII is composed of 1 copy each of membrane proteins PsbA, PsbB, PsbC, PsbD, PsbE, PsbF, PsbH, PsbI, PsbJ, PsbK, PsbL, PsbM, PsbT, PsbX, PsbY, PsbZ, Psb30/Ycf12, at least 3 peripheral proteins of the oxygen-evolving complex and a large number of cofactors. It forms dimeric complexes. Binds multiple chlorophylls. PSII binds additional chlorophylls, carotenoids and specific lipids. is required as a cofactor.

It localises to the plastid. The protein resides in the chloroplast thylakoid membrane. One of the components of the core complex of photosystem II (PSII). It binds chlorophyll and helps catalyze the primary light-induced photochemical processes of PSII. PSII is a light-driven water:plastoquinone oxidoreductase, using light energy to abstract electrons from H(2)O, generating O(2) and a proton gradient subsequently used for ATP formation. This is Photosystem II CP47 reaction center protein from Cicer arietinum (Chickpea).